Consider the following 217-residue polypeptide: Ribosomal RNA small subunit methyltransferase G (217 aa).

Residues Gly79, Leu84, 130–131 (IE), and Arg148 contribute to the S-adenosyl-L-methionine site.

It belongs to the methyltransferase superfamily. RNA methyltransferase RsmG family.

It localises to the cytoplasm. It carries out the reaction guanosine(527) in 16S rRNA + S-adenosyl-L-methionine = N(7)-methylguanosine(527) in 16S rRNA + S-adenosyl-L-homocysteine. In terms of biological role, specifically methylates the N7 position of guanine in position 527 of 16S rRNA. The polypeptide is Ribosomal RNA small subunit methyltransferase G (Desulfotalea psychrophila (strain LSv54 / DSM 12343)).